We begin with the raw amino-acid sequence, 371 residues long: Probable alcohol acetyltransferase (371 aa).

Residues Ser-124 and His-295 each act as charge relay system in the active site. A disordered region spans residues 325-352 (AKALEESPKESYSRPPAHQQPLHKNDFT). The segment covering 327 to 336 (ALEESPKESY) has biased composition (basic and acidic residues).

The protein belongs to the AB hydrolase superfamily.

Its function is as follows. Probable alcohol acetyltransferase that uses acetyl-CoA to synthesize acetate esters from various alcohols. Not involved in the synthesis of ethyl acetate. This Cyberlindnera fabianii (Yeast) protein is Probable alcohol acetyltransferase (EAT2).